A 386-amino-acid polypeptide reads, in one-letter code: Succinate--CoA ligase [ADP-forming] subunit beta (386 aa).

In terms of domain architecture, ATP-grasp spans 9-244; the sequence is KQILKRFGIS…YDEEIPEEIE (236 aa). Residues K46, 53-55, E99, C102, and E107 contribute to the ATP site; that span reads GRG. Mg(2+) is bound by residues N199 and D213. Substrate-binding positions include N264 and 320-322; that span reads GIM.

It belongs to the succinate/malate CoA ligase beta subunit family. In terms of assembly, heterotetramer of two alpha and two beta subunits. Requires Mg(2+) as cofactor.

It catalyses the reaction succinate + ATP + CoA = succinyl-CoA + ADP + phosphate. The catalysed reaction is GTP + succinate + CoA = succinyl-CoA + GDP + phosphate. The protein operates within carbohydrate metabolism; tricarboxylic acid cycle; succinate from succinyl-CoA (ligase route): step 1/1. Its function is as follows. Succinyl-CoA synthetase functions in the citric acid cycle (TCA), coupling the hydrolysis of succinyl-CoA to the synthesis of either ATP or GTP and thus represents the only step of substrate-level phosphorylation in the TCA. The beta subunit provides nucleotide specificity of the enzyme and binds the substrate succinate, while the binding sites for coenzyme A and phosphate are found in the alpha subunit. This Ehrlichia ruminantium (strain Welgevonden) protein is Succinate--CoA ligase [ADP-forming] subunit beta.